A 457-amino-acid chain; its full sequence is F-box/LRR-repeat protein At2g42730 (457 aa).

An F-box domain is found at 4–50 (KDVISRLPDEVLGRILSLISTKEAVSTSVLSKRWKNMFVLVSNLDID). LRR repeat units follow at residues 265-288 (MDET…MRNL), 292-315 (IRNV…CKEM), and 318-343 (FDSL…LIKN).

The protein is F-box/LRR-repeat protein At2g42730 of Arabidopsis thaliana (Mouse-ear cress).